Here is a 320-residue protein sequence, read N- to C-terminus: Beta-ketoacyl-[acyl-carrier-protein] synthase III (320 aa).

Active-site residues include Cys112 and His245. The segment at 246 to 250 is ACP-binding; sequence QANIR. Asn275 is an active-site residue.

Belongs to the thiolase-like superfamily. FabH family. As to quaternary structure, homodimer.

The protein localises to the cytoplasm. It catalyses the reaction malonyl-[ACP] + acetyl-CoA + H(+) = 3-oxobutanoyl-[ACP] + CO2 + CoA. The protein operates within lipid metabolism; fatty acid biosynthesis. Catalyzes the condensation reaction of fatty acid synthesis by the addition to an acyl acceptor of two carbons from malonyl-ACP. Catalyzes the first condensation reaction which initiates fatty acid synthesis and may therefore play a role in governing the total rate of fatty acid production. Possesses both acetoacetyl-ACP synthase and acetyl transacylase activities. Its substrate specificity determines the biosynthesis of branched-chain and/or straight-chain of fatty acids. The protein is Beta-ketoacyl-[acyl-carrier-protein] synthase III of Streptococcus thermophilus (strain ATCC BAA-250 / LMG 18311).